We begin with the raw amino-acid sequence, 139 residues long: D-ribose pyranase (139 aa).

Histidine 20 functions as the Proton donor in the catalytic mechanism. Substrate contacts are provided by residues aspartate 28, histidine 106, and 128-130 (YAN).

The protein belongs to the RbsD / FucU family. RbsD subfamily. As to quaternary structure, homodecamer.

It is found in the cytoplasm. The catalysed reaction is beta-D-ribopyranose = beta-D-ribofuranose. It functions in the pathway carbohydrate metabolism; D-ribose degradation; D-ribose 5-phosphate from beta-D-ribopyranose: step 1/2. Catalyzes the interconversion of beta-pyran and beta-furan forms of D-ribose. This chain is D-ribose pyranase, found in Actinobacillus pleuropneumoniae serotype 7 (strain AP76).